The sequence spans 743 residues: POU domain, class 2, transcription factor 1 (743 aa).

Residues 1–11 show a composition bias toward polar residues; it reads MNNPSETSKPS. Disordered regions lie at residues 1–34, 67–95, 258–283, and 357–381; these read MNNP…QPVP, SLNV…SVQA, ATPI…EEPS, and SSDS…RRRK. The segment covering 81-95 has biased composition (low complexity); that stretch reads SQQPSQPSQQPSVQA. Phosphothreonine is present on residues Thr-270 and Thr-276. A POU-specific domain is found at 280 to 354; sequence EEPSDLEELE…LLEKWLNDAE (75 aa). Ser-283 carries the post-translational modification Phosphoserine. A compositionally biased stretch (low complexity) spans 357-371; sequence SSDSSLSSPSALNSP. The segment at residues 379–438 is a DNA-binding region (homeobox); sequence RRKKRTSIETNIRVALEKSFLENQKPTSEEITMIADQLNMEKEVIRVWFCNRRQKEKRIN. Ser-385 and Ser-448 each carry phosphoserine. Residues 494–504 are compositionally biased toward polar residues; it reads VTGTSDTTSNN. A disordered region spans residues 494 to 557; the sequence is VTGTSDTTSN…TTSTPLSSPL (64 aa). The span at 505–557 shows a compositional bias: low complexity; that stretch reads TATVISTAPPASSAVTSPSLSPSPSASASTSEASSASETSTTQTTSTPLSSPL.

It belongs to the POU transcription factor family. Class-2 subfamily. As to quaternary structure, interacts with POU2AF1; the interaction increases POU2F1 transactivation activity. Interacts with NR3C1, AR, PGR and HCFC1. In terms of assembly, (Microbial infection) Associates with the herpes simplex virus VP16-induced complex; binding to HCFC1 activates the viral transcriptional activator VP16 for association with POU2F1, to form a multiprotein-DNA complex responsible for activating transcription of the viral immediate early genes. (Microbial infection) Interacts with human herpesvirus 8 (KSHV) protein RTA/ORF50; this interaction enhances RTA/ORF50-mediated transactivation of several viral promoters including K-bZIP promoter. Phosphorylated by PRKDC. As to expression, ubiquitous. Isoform 2 is lymphocyte-specific.

It localises to the nucleus. Functionally, transcription factor that binds to the octamer motif (5'-ATTTGCAT-3') and activates the promoters of the genes for some small nuclear RNAs (snRNA) and of genes such as those for histone H2B and immunoglobulins. Modulates transcription transactivation by NR3C1, AR and PGR. Its function is as follows. (Microbial infection) In case of human herpes simplex virus (HSV) infection, POU2F1 forms a multiprotein-DNA complex with the viral transactivator protein VP16 and HCFC1 thereby enabling the transcription of the viral immediate early genes. In Homo sapiens (Human), this protein is POU domain, class 2, transcription factor 1 (POU2F1).